Here is an 89-residue protein sequence, read N- to C-terminus: UPF0335 protein OCAR_5086/OCA5_c28780 (89 aa).

The protein belongs to the UPF0335 family.

The polypeptide is UPF0335 protein OCAR_5086/OCA5_c28780 (Afipia carboxidovorans (strain ATCC 49405 / DSM 1227 / KCTC 32145 / OM5) (Oligotropha carboxidovorans)).